The chain runs to 835 residues: Protein translocase subunit SecA (835 aa).

Residues Gln-85, 103 to 107 (GEGKT), and Asp-492 contribute to the ATP site. Residues Cys-819, Cys-821, Cys-830, and Cys-831 each coordinate Zn(2+).

It belongs to the SecA family. Monomer and homodimer. Part of the essential Sec protein translocation apparatus which comprises SecA, SecYEG and auxiliary proteins SecDF. Other proteins may also be involved. Zn(2+) serves as cofactor.

Its subcellular location is the cell membrane. It localises to the cytoplasm. It catalyses the reaction ATP + H2O + cellular proteinSide 1 = ADP + phosphate + cellular proteinSide 2.. Its function is as follows. Part of the Sec protein translocase complex. Interacts with the SecYEG preprotein conducting channel. Has a central role in coupling the hydrolysis of ATP to the transfer of proteins into and across the cell membrane, serving as an ATP-driven molecular motor driving the stepwise translocation of polypeptide chains across the membrane. The polypeptide is Protein translocase subunit SecA (Clostridium botulinum (strain Okra / Type B1)).